The primary structure comprises 220 residues: MAYRDQPLGELALSIPRASALFRKYNMDYCCGGKQTLARAAARKELDVEVIEAELAKLAEQPIEKDWRSAPLAEIIDHIIVRYHDRHREQLPELILQATKVERVHADKPSVPKGLTKYLTMLHEELSSHMMKEEQILFPMIKQGMGSQAMGPISVMESEHDEAGELLEVIKHTTNNVTPPPEACTTWKAMYNGINELIDDLMDHISLENNVLFPRALAGE.

This sequence belongs to the RIC family. YtfE subfamily. Homodimer.

The protein resides in the cytoplasm. Functionally, di-iron-containing protein involved in the repair of iron-sulfur clusters damaged by oxidative and nitrosative stress conditions. This Shigella boydii serotype 4 (strain Sb227) protein is Iron-sulfur cluster repair protein YtfE.